We begin with the raw amino-acid sequence, 459 residues long: MSEQSSVVVIGAGLAGTEAAWQVAKAGVPVTLWEMRPFKRSPAHHSSEFAELVCSNSFGALSSDRAAGLLQEELRRLGSLVIQTADHHSVPAGGALAVDRGRYSAALTSALDDHPLVTIRREEQLTLPDPDQIAVLATGPLTSEALADDLRAFTGREDCHFFDAASPIVEGESIDMTKAFRASRYDKGDADYINCPMDQDQFLAFRAALLDAEQAELKDFDQNSATFFEGCLPIEELARRGEDTMRYGPLKPIGLWDPRWGDVNDRDVRRAKRAYAVVQLRQEDKDGRLWNLVGFQTNLKWGEQKRVLRLIPGLEQADFVRFGVMHRNTFLEAPELLEPTLQFRRRPHLLAAGQITGTEGYAAAVAGGWLAGTNAARLVHGHDPMQLPHTTMIGALTHFISEAPSGKFQPMPPNFGLMPQLQECIREKRARYGAYRDRALADLQRTIDESQVDNVVCTA.

FAD is bound at residue 11-16 (GAGLAG).

It belongs to the MnmG family. TrmFO subfamily. The cofactor is FAD.

It localises to the cytoplasm. It carries out the reaction uridine(54) in tRNA + (6R)-5,10-methylene-5,6,7,8-tetrahydrofolate + NADH + H(+) = 5-methyluridine(54) in tRNA + (6S)-5,6,7,8-tetrahydrofolate + NAD(+). It catalyses the reaction uridine(54) in tRNA + (6R)-5,10-methylene-5,6,7,8-tetrahydrofolate + NADPH + H(+) = 5-methyluridine(54) in tRNA + (6S)-5,6,7,8-tetrahydrofolate + NADP(+). In terms of biological role, catalyzes the folate-dependent formation of 5-methyl-uridine at position 54 (M-5-U54) in all tRNAs. In Synechococcus sp. (strain CC9311), this protein is Methylenetetrahydrofolate--tRNA-(uracil-5-)-methyltransferase TrmFO.